The sequence spans 471 residues: Cysteine--tRNA ligase (471 aa).

C29 is a Zn(2+) binding site. The 'HIGH' region motif lies at 31–41 (LTVQSEPHVGH). Zn(2+) contacts are provided by C215, H240, and E244. Residues 271-275 (KMSKS) carry the 'KMSKS' region motif. ATP is bound at residue K274.

Belongs to the class-I aminoacyl-tRNA synthetase family. In terms of assembly, monomer. The cofactor is Zn(2+).

It localises to the cytoplasm. It carries out the reaction tRNA(Cys) + L-cysteine + ATP = L-cysteinyl-tRNA(Cys) + AMP + diphosphate. In Nocardioides sp. (strain ATCC BAA-499 / JS614), this protein is Cysteine--tRNA ligase.